A 1195-amino-acid polypeptide reads, in one-letter code: Chromosome partition protein Smc (1195 aa).

33–40 contacts ATP; the sequence is PNGSGKSN. Coiled coils occupy residues 185–241, 273–348, and 380–528; these read GVAQ…RQEQ, DAAT…IQAL, and QYQQ…QETQ. In terms of domain architecture, SMC hinge spans 542-658; it reads PGVHGLVAQL…FERLDQARRY (117 aa). Residues 698-1043 are a coiled coil; sequence GESAEVRAIR…ELLLRIENFT (346 aa).

Belongs to the SMC family. Homodimer.

The protein localises to the cytoplasm. Its function is as follows. Required for chromosome condensation and partitioning. The chain is Chromosome partition protein Smc from Synechococcus sp. (strain ATCC 27144 / PCC 6301 / SAUG 1402/1) (Anacystis nidulans).